We begin with the raw amino-acid sequence, 526 residues long: Cytochrome P450 monooxygeanse terK (526 aa).

A helical transmembrane segment spans residues asparagine 21–phenylalanine 43. Heme is bound at residue cysteine 465.

Belongs to the cytochrome P450 family. It depends on heme as a cofactor.

The protein resides in the membrane. It participates in secondary metabolite biosynthesis. In terms of biological role, cytochrome P450 monooxygeanse; part of the gene cluster that mediates the biosynthesis of terpendoles, indole-diterpene (IDT) mycotoxins including terpendole I, terpendole K, terpendole C, as well as the kinesin Eg5 inhibitor terpendole E. Terpendoles biosynthesis begins with the synthesis of geranylgeranyl diphosphate (GGPP) by a yet unidentified GGPP synthase. Condensation of indole-3-glycerol phosphate with GGPP by the prenyltransferase terC then forms 3-geranylgeranylindole (3-GGI), followed by epoxidation and cyclization of this intermediate (by the FAD-dependent monooxygeanse terM and the terpene cyclase terB) to form paspaline. The cytochrome monooxygenase terQ then hydroxylates paspalline at C-11 to yield terpendole E. The cytochrome monooxygenase terP converts terpendole E to 13-desoxyterpendole I, and terQ converts 13-desoxyterpendole I into terpendole I. TerF and terK are required for conversion of terpendole I to terpendole C which is further converted to terpendole K. The protein is Cytochrome P450 monooxygeanse terK of Tolypocladium album (Soil fungus).